The sequence spans 54 residues: Apelin receptor early endogenous ligand (54 aa).

An N-terminal signal peptide occupies residues 1 to 25; that stretch reads MRFQPLFWVFFIFAMSLLFITEEKS.

It belongs to the Elabela/Toddler family. As to quaternary structure, interacts with APLNR.

It localises to the secreted. The protein resides in the extracellular space. In terms of biological role, peptide hormone that functions as endogenous ligand for the G-protein-coupled apelin receptor (APLNR/APJ), that plays a role in the regulation of normal cardiovascular function and fluid homeostasis. Functions as a balanced agonist activating both G(i) protein pathway and beta-arrestin pathway of APLNR. Downstream G proteins activation, apelin can inhibit cAMP production and activate key intracellular effectors such as ERKs. On the other hand, APLNR activation induces beta-arrestin recruitment to the membrane leading to desensitization and internalization of the receptor. Required for mesendodermal differentiation, blood vessels formation and heart morphogenesis during early development and for adult cardiovascular homeostasis. Acts as a motogen by promoting mesendodermal cell migration during gastrulation by binding and activating APLNR. Acts as an early embryonic regulator of cellular movement with a role in migration and development of cardiac progenitor cells. May act as a chemoattractant for the activation of angioblast migration toward the embryonic midline, i.e. the position of the future vessel formation, during vasculogenesis. Positively regulates sinus venosus (SV)-derived endothelial cells migration into the developing heart to promote coronary blood vessel sprouting. Plays a role in placental vascular development; promotes placental trophoblast invasion and spiral artery remodeling in the uterus. Involved in the regulation of maternal cardiovascular homeostasis to prevent gestational hypertension and for potent cardioprotective functions during heart failure. Mediates myocardial contractility in an ERK1/2-dependent manner. This chain is Apelin receptor early endogenous ligand, found in Rattus norvegicus (Rat).